A 309-amino-acid chain; its full sequence is Probable nitrogen assimilation transcriptional activator (309 aa).

An HTH lysR-type domain is found at 1–57; it reads MRLEQLQAFLKVAELGSFQQAALQSEVTQSTISRQIQGLESALKCQLFHRGAQAKLT. A DNA-binding region (H-T-H motif) is located at residues 18–38; the sequence is FQQAALQSEVTQSTISRQIQG.

The protein belongs to the LysR transcriptional regulatory family.

Functionally, seems to regulate utilization of fixed nitrogen by controlling the expression of a certain gene(s) involved in nitrogen metabolism. The sequence is that of Probable nitrogen assimilation transcriptional activator (ntcB) from Synechocystis sp. (strain ATCC 27184 / PCC 6803 / Kazusa).